The chain runs to 271 residues: MRVYLISFFFTAIYVVSLYTFPVARPRPSLNRNDPKVITARCISVLLASSVCCILTRLIIGPSLNVFTFPTDQVLKSLLHAATIFIGPLYEVWIVDKEYRLFFIHLKDCLSNAIAWRNIIIGPLSEELTFRCCIVPICEAAGWSRLKIIFVAPLLFGMAHIHHTYEFLLAYPNAYIAAALQTVVQFSYTTVFGWYTTHLFLSTHSLFPSFLVHAFCNSMGLPTLYGKIGNRNQTRIYYTLLLLGVLIFYMTWGITDFNNHQDFEPRLVPLN.

Helical transmembrane passes span 3 to 23 and 42 to 62; these read VYLI…TFPV and CISV…IIGP. Residues Glu-126 and His-160 each act as proton donor/acceptor in the active site. The next 2 helical transmembrane spans lie at 174–194 and 236–256; these read AYIA…VFGW and IYYT…GITD.

The protein belongs to the peptidase U48 family.

It is found in the endoplasmic reticulum membrane. The catalysed reaction is Hydrolyzes the peptide bond -P2-(S-farnesyl or geranylgeranyl)C-P1'-P2'-P3'-COOH where P1' and P2' are amino acids with aliphatic sidechains and P3' is any C-terminal residue.. In terms of biological role, protease involved in the processing of a variety of prenylated proteins containing the C-terminal CAAX motif, where C is a cysteine modified with an isoprenoid lipid, A is an aliphatic amino acid and X is any C-terminal amino acid. Proteolytically removes the C-terminal three residues of farnesylated proteins, leaving the prenylated cysteine as the new C-terminus. This Schizosaccharomyces pombe (strain 972 / ATCC 24843) (Fission yeast) protein is Probable CAAX prenyl protease 2.